A 201-amino-acid chain; its full sequence is Holliday junction branch migration complex subunit RuvA (201 aa).

Residues 1–64 are domain I; the sequence is MYEYIRGQFQ…EDFIGLYGFT (64 aa). Positions 65 to 143 are domain II; it reads TKEELEMFKL…PDELTSEEEQ (79 aa). Residues 144–152 are flexible linker; the sequence is LIEGINDNS. The tract at residues 153–201 is domain III; that stretch reads DYSFNINETLSALMALGYTEKEAQKALEKVDKTLSIENMIKESLKLLMR.

This sequence belongs to the RuvA family. As to quaternary structure, homotetramer. Forms an RuvA(8)-RuvB(12)-Holliday junction (HJ) complex. HJ DNA is sandwiched between 2 RuvA tetramers; dsDNA enters through RuvA and exits via RuvB. An RuvB hexamer assembles on each DNA strand where it exits the tetramer. Each RuvB hexamer is contacted by two RuvA subunits (via domain III) on 2 adjacent RuvB subunits; this complex drives branch migration. In the full resolvosome a probable DNA-RuvA(4)-RuvB(12)-RuvC(2) complex forms which resolves the HJ.

Its subcellular location is the cytoplasm. Its function is as follows. The RuvA-RuvB-RuvC complex processes Holliday junction (HJ) DNA during genetic recombination and DNA repair, while the RuvA-RuvB complex plays an important role in the rescue of blocked DNA replication forks via replication fork reversal (RFR). RuvA specifically binds to HJ cruciform DNA, conferring on it an open structure. The RuvB hexamer acts as an ATP-dependent pump, pulling dsDNA into and through the RuvAB complex. HJ branch migration allows RuvC to scan DNA until it finds its consensus sequence, where it cleaves and resolves the cruciform DNA. The polypeptide is Holliday junction branch migration complex subunit RuvA (Clostridium perfringens (strain SM101 / Type A)).